The primary structure comprises 232 residues: Ribonuclease 3 (232 aa).

An RNase III domain is found at 6–135; it reads QDYLAKTYGI…FIGALYLDQG (130 aa). E48 serves as a coordination point for Mg(2+). D52 is a catalytic residue. The Mg(2+) site is built by D121 and E124. The active site involves E124. Residues 161–230 form the DRBM domain; it reads DAKTSLQEFL…AKHALEKLRM (70 aa).

It belongs to the ribonuclease III family. As to quaternary structure, homodimer. Mg(2+) serves as cofactor.

Its subcellular location is the cytoplasm. The catalysed reaction is Endonucleolytic cleavage to 5'-phosphomonoester.. Functionally, digests double-stranded RNA. Involved in the processing of primary rRNA transcript to yield the immediate precursors to the large and small rRNAs (23S and 16S). Processes some mRNAs, and tRNAs when they are encoded in the rRNA operon. Processes pre-crRNA and tracrRNA of type II CRISPR loci if present in the organism. The chain is Ribonuclease 3 from Limosilactobacillus fermentum (strain NBRC 3956 / LMG 18251) (Lactobacillus fermentum).